A 990-amino-acid chain; its full sequence is A-type ATP synthase subunit B (990 aa).

The DOD-type homing endonuclease domain maps to 491-614 (VAGLIASDGS…LQLLLKRLGV (124 aa)).

It belongs to the ATPase alpha/beta chains family. As to quaternary structure, has multiple subunits with at least A(3), B(3), C, D, E, F, H, I and proteolipid K(x). Post-translationally, this protein undergoes a protein self splicing that involves a post-translational excision of the VDE intervening region (intein) followed by peptide ligation.

It is found in the cell membrane. Its function is as follows. Component of the A-type ATP synthase that produces ATP from ADP in the presence of a proton gradient across the membrane. The B chain is a regulatory subunit. The chain is A-type ATP synthase subunit B from Methanopyrus kandleri (strain AV19 / DSM 6324 / JCM 9639 / NBRC 100938).